A 184-amino-acid chain; its full sequence is Endoribonuclease YbeY (184 aa).

Residues H118, H122, and H128 each coordinate Zn(2+). The segment at 156-184 is disordered; sequence YHQDRQSQKDQRLLDKSRYFDELNHGDTP. A compositionally biased stretch (basic and acidic residues) spans 157–184; it reads HQDRQSQKDQRLLDKSRYFDELNHGDTP.

This sequence belongs to the endoribonuclease YbeY family. Zn(2+) serves as cofactor.

The protein localises to the cytoplasm. In terms of biological role, single strand-specific metallo-endoribonuclease involved in late-stage 70S ribosome quality control and in maturation of the 3' terminus of the 16S rRNA. The sequence is that of Endoribonuclease YbeY from Mycolicibacterium vanbaalenii (strain DSM 7251 / JCM 13017 / BCRC 16820 / KCTC 9966 / NRRL B-24157 / PYR-1) (Mycobacterium vanbaalenii).